Reading from the N-terminus, the 120-residue chain is Cell division protein FtsL (120 aa).

Residues 1–22 are disordered; it reads MSNVAYKSNLEPNRVHREAEQP. At 1 to 37 the chain is on the cytoplasmic side; that stretch reads MSNVAYKSNLEPNRVHREAEQPKKQILKRGQMTLGEK. Over residues 13 to 22 the composition is skewed to basic and acidic residues; that stretch reads NRVHREAEQP. A helical transmembrane segment spans residues 38 to 58; it reads VIITIALAIVLVVAFRIISVQ. Topologically, residues 59-120 are extracellular; the sequence is AQIYTVNQEI…GDNVKVVDGQ (62 aa).

Belongs to the FtsL family.

It localises to the cell membrane. Essential cell division protein. This is Cell division protein FtsL from Listeria monocytogenes serovar 1/2a (strain ATCC BAA-679 / EGD-e).